A 66-amino-acid polypeptide reads, in one-letter code: Large ribosomal subunit protein bL35 (66 aa).

Belongs to the bacterial ribosomal protein bL35 family.

This Brucella melitensis biotype 1 (strain ATCC 23456 / CCUG 17765 / NCTC 10094 / 16M) protein is Large ribosomal subunit protein bL35.